The following is a 409-amino-acid chain: Putative integrase/recombinase y4rA (409 aa).

Residues Ser-112–Arg-197 form the Core-binding (CB) domain. Residues Ser-220 to Leu-402 enclose the Tyr recombinase domain. Catalysis depends on residues Arg-260, Lys-284, His-354, Arg-357, and His-380. Tyr-389 acts as the O-(3'-phospho-DNA)-tyrosine intermediate in catalysis.

This sequence belongs to the 'phage' integrase family.

This is Putative integrase/recombinase y4rA from Sinorhizobium fredii (strain NBRC 101917 / NGR234).